Consider the following 520-residue polypeptide: Aspartate-proton symporter (520 aa).

Helical transmembrane passes span 13–33, 49–69, 85–105, 130–150, 161–181, 201–221, 232–252, 281–301, 345–365, 366–386, 402–422, 425–445, 460–480, and 482–502; these read LFDL…LFAV, ILGG…GAAL, HLVG…LISI, TISG…LNYW, IISI…IFHF, AAIS…IVSV, IPIA…VLQV, IAVM…AILS, WLSF…NALV, NVCS…SAAL, MSII…WSGW, VSWL…FSKY, AWWL…GSFG, and GLGI…SLAI.

It belongs to the amino acid-polyamine-organocation (APC) superfamily. AGT (TC 2.A.3.11) family.

Its subcellular location is the cell membrane. In terms of biological role, uptake of L-aspartate with the concomitant import of a proton. Can also transport aspartate hydroxamate and L-glutamate with lower affinity and efficiency. This chain is Aspartate-proton symporter (yveA), found in Bacillus subtilis (strain 168).